The sequence spans 198 residues: Large ribosomal subunit protein eL19 (198 aa).

2 disordered regions span residues 66-85 (YEEARRKGRHTGYGKRRGTA) and 150-177 (KRAKQLADQAQARRDKNKESRKRREERQ). Basic residues predominate over residues 71 to 83 (RKGRHTGYGKRRG). Residues 160 to 177 (QARRDKNKESRKRREERQ) are compositionally biased toward basic and acidic residues.

It belongs to the eukaryotic ribosomal protein eL19 family.

The protein is Large ribosomal subunit protein eL19 (rpl-19) of Caenorhabditis elegans.